The sequence spans 163 residues: Aspartate carbamoyltransferase regulatory chain (163 aa).

Residues cysteine 113, cysteine 118, cysteine 143, and cysteine 146 each coordinate Zn(2+).

Belongs to the PyrI family. In terms of assembly, contains catalytic and regulatory chains. Zn(2+) is required as a cofactor.

Its function is as follows. Involved in allosteric regulation of aspartate carbamoyltransferase. This chain is Aspartate carbamoyltransferase regulatory chain, found in Caldivirga maquilingensis (strain ATCC 700844 / DSM 13496 / JCM 10307 / IC-167).